A 179-amino-acid chain; its full sequence is Large ribosomal subunit protein uL5 (179 aa).

This sequence belongs to the universal ribosomal protein uL5 family. Part of the 50S ribosomal subunit; part of the 5S rRNA/L5/L18/L25 subcomplex. Contacts the 5S rRNA and the P site tRNA. Forms a bridge to the 30S subunit in the 70S ribosome.

Its function is as follows. This is one of the proteins that bind and probably mediate the attachment of the 5S RNA into the large ribosomal subunit, where it forms part of the central protuberance. In the 70S ribosome it contacts protein S13 of the 30S subunit (bridge B1b), connecting the 2 subunits; this bridge is implicated in subunit movement. Contacts the P site tRNA; the 5S rRNA and some of its associated proteins might help stabilize positioning of ribosome-bound tRNAs. In Shewanella oneidensis (strain ATCC 700550 / JCM 31522 / CIP 106686 / LMG 19005 / NCIMB 14063 / MR-1), this protein is Large ribosomal subunit protein uL5.